Reading from the N-terminus, the 650-residue chain is MANCEGTERGDGDEDANRAGGWFLVEAIVEQTTGYQESSDEDENSEDRGEDLVDFIDTRSLGDGQEVPLDLFVQQNARDDAATVQALKRKYTCSPASSSCVSLVDSELSPRLDAISINRGHDRARRRLFDQDSGYGHTQVDIGAPESQVSGGTQHTKGGGGAVQEAEEERVGGDGEAQCSAQTQQTPERAADVLEIFKVSNLRVTLLHKFKELFGLAYGDLVRQFKSDKSICGDWVVCAFGVYHAVAEAVKTLIQPICLYAHIQIQTCQWGMVILMLVRYKCGKSRETVAHSMSTLLNIPEKQMLIEPPKIRSGPCALYWYRTAMGNGSEVYGETPEWIVRQTVVGHAMQETQFSLSTLVQWAYDNDITDESELAYDYAMLGNEDPNAAAFLASNCQAKYIKDAITMCKHYKRAEQARMSMTQWIAHRGRKVADSGDLREIVKYLRYQRVEFVTFMGALKLFLKGVPKKSCMVFYGPSDTGKSLFCMSLLKYLGGAVISYVNSGSHFWLSPLVDAKVGLLDDATYQCWQYIDTYLRTVLDGNAISIDRKHRNLTQLKCPPLMITTNINPLEDQAFKYLHSRIVLFKFMHKCPLKSNGDPVYTLNNENWKSFFQRSWARIEGPDEQEEEEDEDGSTSRPFRCVPGEIARPL.

Residues 88–90 (KRK) carry the Nuclear localization signal motif. Phosphoserine; by host is present on residues S94, S98, and S109. A Nuclear export signal motif is present at residues 108–117 (LSPRLDAISI). The segment at 134-184 (GYGHTQVDIGAPESQVSGGTQHTKGGGGAVQEAEEERVGGDGEAQCSAQTQ) is disordered. The segment at 185–351 (QTPERAADVL…QTVVGHAMQE (167 aa)) is DNA-binding region. In terms of domain architecture, SF3 helicase spans 450 to 600 (VEFVTFMGAL…CPLKSNGDPV (151 aa)). 476-483 (GPSDTGKS) serves as a coordination point for ATP. Residue K557 forms a Glycyl lysine isopeptide (Lys-Gly) (interchain with G-Cter in SUMO) linkage. The segment at 620 to 650 (EGPDEQEEEEDEDGSTSRPFRCVPGEIARPL) is disordered. Residues 622–633 (PDEQEEEEDEDG) are compositionally biased toward acidic residues.

This sequence belongs to the papillomaviridae E1 protein family. In terms of assembly, can form hexamers. Interacts with E2 protein; this interaction increases E1 DNA binding specificity. Interacts with host DNA polymerase subunit POLA2. Interacts with host single stranded DNA-binding protein RPA1. Interacts with host TOP1; this interaction stimulates the enzymatic activity of TOP1. In terms of processing, phosphorylated. Post-translationally, sumoylated.

The protein resides in the host nucleus. It catalyses the reaction Couples ATP hydrolysis with the unwinding of duplex DNA by translocating in the 3'-5' direction.. It carries out the reaction ATP + H2O = ADP + phosphate + H(+). ATP-dependent DNA 3'-5' helicase required for initiation of viral DNA replication. It forms a complex with the viral E2 protein. The E1-E2 complex binds to the replication origin which contains binding sites for both proteins. During the initial step, a dimer of E1 interacts with a dimer of protein E2 leading to a complex that binds the viral origin of replication with high specificity. Then, a second dimer of E1 displaces the E2 dimer in an ATP-dependent manner to form the E1 tetramer. Following this, two E1 monomers are added to each half of the site, which results in the formation of two E1 trimers on the viral ori. Subsequently, two hexamers will be created. The double hexamer acts as a bi-directional helicase machinery and unwinds the viral DNA and then recruits the host DNA polymerase to start replication. The chain is Replication protein E1 from Homo sapiens (Human).